Reading from the N-terminus, the 132-residue chain is Small ribosomal subunit protein uS9 (132 aa).

The protein belongs to the universal ribosomal protein uS9 family.

The chain is Small ribosomal subunit protein uS9 (rps9) from Thermoplasma volcanium (strain ATCC 51530 / DSM 4299 / JCM 9571 / NBRC 15438 / GSS1).